The following is a 455-amino-acid chain: Ribosomal protein uS12 methylthiotransferase RimO (455 aa).

The region spanning 30-140 (PTIGMVSLGC…VLDAVHGAVP (111 aa)) is the MTTase N-terminal domain. [4Fe-4S] cluster-binding residues include Cys-39, Cys-75, Cys-104, Cys-171, Cys-175, and Cys-178. The region spanning 157 to 386 (LTPRHFSYLK…MEKAQAISEA (230 aa)) is the Radical SAM core domain. Residues 389–455 (AAKVGRRIEV…GEYDLWGRPV (67 aa)) form the TRAM domain.

The protein belongs to the methylthiotransferase family. RimO subfamily. Requires [4Fe-4S] cluster as cofactor.

The protein localises to the cytoplasm. It carries out the reaction L-aspartate(89)-[ribosomal protein uS12]-hydrogen + (sulfur carrier)-SH + AH2 + 2 S-adenosyl-L-methionine = 3-methylsulfanyl-L-aspartate(89)-[ribosomal protein uS12]-hydrogen + (sulfur carrier)-H + 5'-deoxyadenosine + L-methionine + A + S-adenosyl-L-homocysteine + 2 H(+). Its function is as follows. Catalyzes the methylthiolation of an aspartic acid residue of ribosomal protein uS12. This is Ribosomal protein uS12 methylthiotransferase RimO from Cereibacter sphaeroides (strain ATCC 17029 / ATH 2.4.9) (Rhodobacter sphaeroides).